Here is a 128-residue protein sequence, read N- to C-terminus: L-ectoine synthase (128 aa).

Belongs to the ectoine synthase family.

It catalyses the reaction (2S)-4-acetamido-2-aminobutanoate = L-ectoine + H2O. Its pathway is amine and polyamine biosynthesis; ectoine biosynthesis; L-ectoine from L-aspartate 4-semialdehyde: step 3/3. Functionally, catalyzes the circularization of gamma-N-acetyl-alpha,gamma-diaminobutyric acid (ADABA) to ectoine (1,4,5,6-tetrahydro-2-methyl-4-pyrimidine carboxylic acid), which is an excellent osmoprotectant. The polypeptide is L-ectoine synthase (Vibrio campbellii (strain ATCC BAA-1116)).